The following is a 423-amino-acid chain: AP-1 complex subunit mu-1 (423 aa).

Position 2 is an N-acetylserine (S2). Phosphothreonine is present on residues T152, T154, and T223. The 254-residue stretch at 168-421 (KNEVFLDVIE…ITQNGDYQLR (254 aa)) folds into the MHD domain.

This sequence belongs to the adaptor complexes medium subunit family. In terms of assembly, adaptor protein complex 1 (AP-1) is a heterotetramer composed of two large adaptins (gamma-type subunit AP1G1 and beta-type subunit AP1B1), a medium adaptin (mu-type subunit AP1M1 or AP1M2) and a small adaptin (sigma-type subunit AP1S1 or AP1S2 or AP1S3). Interacts with MARCHF11. In terms of processing, phosphorylation of membrane-bound AP1M1/AP1M2 increases its affinity for sorting signals.

The protein resides in the cytoplasmic vesicle. It localises to the clathrin-coated vesicle membrane. The protein localises to the golgi apparatus. Its function is as follows. Subunit of clathrin-associated adaptor protein complex 1 that plays a role in protein sorting in the trans-Golgi network (TGN) and endosomes. The AP complexes mediate the recruitment of clathrin to membranes and the recognition of sorting signals within the cytosolic tails of transmembrane cargo molecules. This is AP-1 complex subunit mu-1 from Bos taurus (Bovine).